The following is a 344-amino-acid chain: Dihydroorotase (344 aa).

Positions 13 and 15 each coordinate Zn(2+). Substrate-binding positions include 15-17 (HLR) and Asn41. Zn(2+)-binding residues include Lys98, His135, and His173. An N6-carboxylysine modification is found at Lys98. His135 is a binding site for substrate. Leu218 serves as a coordination point for substrate. Residue Asp247 coordinates Zn(2+). Residue Asp247 is part of the active site. The substrate site is built by His251 and Ala263.

This sequence belongs to the metallo-dependent hydrolases superfamily. DHOase family. Class II DHOase subfamily. In terms of assembly, homodimer. Zn(2+) is required as a cofactor.

It carries out the reaction (S)-dihydroorotate + H2O = N-carbamoyl-L-aspartate + H(+). The protein operates within pyrimidine metabolism; UMP biosynthesis via de novo pathway; (S)-dihydroorotate from bicarbonate: step 3/3. Functionally, catalyzes the reversible cyclization of carbamoyl aspartate to dihydroorotate. The sequence is that of Dihydroorotase from Neisseria meningitidis serogroup C / serotype 2a (strain ATCC 700532 / DSM 15464 / FAM18).